The sequence spans 293 residues: Glycine--tRNA ligase alpha subunit (293 aa).

Belongs to the class-II aminoacyl-tRNA synthetase family. As to quaternary structure, tetramer of two alpha and two beta subunits.

It localises to the cytoplasm. The catalysed reaction is tRNA(Gly) + glycine + ATP = glycyl-tRNA(Gly) + AMP + diphosphate. This Acaryochloris marina (strain MBIC 11017) protein is Glycine--tRNA ligase alpha subunit.